The chain runs to 233 residues: Large ribosomal subunit protein eL6x (233 aa).

The segment covering 48 to 72 has biased composition (basic and acidic residues); it reads HDAKSKVDAPVEKPPKFYPAEDVKK. The tract at residues 48 to 80 is disordered; sequence HDAKSKVDAPVEKPPKFYPAEDVKKPLPNRRTA.

This sequence belongs to the eukaryotic ribosomal protein eL6 family.

The polypeptide is Large ribosomal subunit protein eL6x (RPL6C) (Arabidopsis thaliana (Mouse-ear cress)).